Reading from the N-terminus, the 61-residue chain is Large ribosomal subunit protein uL30 (61 aa).

Belongs to the universal ribosomal protein uL30 family. As to quaternary structure, part of the 50S ribosomal subunit.

This chain is Large ribosomal subunit protein uL30, found in Thermobifida fusca (strain YX).